The following is an 881-amino-acid chain: Valine--tRNA ligase (881 aa).

Positions 49-59 (PNVTGKLHLGH) match the 'HIGH' region motif. The 'KMSKS' region signature appears at 526 to 530 (KMSKS). ATP is bound at residue Lys529. Residues 810 to 881 (LADLINLDEE…VRQRLADLEK (72 aa)) are a coiled coil.

The protein belongs to the class-I aminoacyl-tRNA synthetase family. ValS type 1 subfamily. Monomer.

It localises to the cytoplasm. The enzyme catalyses tRNA(Val) + L-valine + ATP = L-valyl-tRNA(Val) + AMP + diphosphate. Its function is as follows. Catalyzes the attachment of valine to tRNA(Val). As ValRS can inadvertently accommodate and process structurally similar amino acids such as threonine, to avoid such errors, it has a 'posttransfer' editing activity that hydrolyzes mischarged Thr-tRNA(Val) in a tRNA-dependent manner. The protein is Valine--tRNA ligase of Bacillus cereus (strain ATCC 14579 / DSM 31 / CCUG 7414 / JCM 2152 / NBRC 15305 / NCIMB 9373 / NCTC 2599 / NRRL B-3711).